The following is a 51-amino-acid chain: Lysis protein for colicin A (51 aa).

Positions 1–18 (MKKIIICVILLAIMLLAA) are cleaved as a signal peptide. Cysteine 19 carries the N-palmitoyl cysteine lipid modification. Cysteine 19 carries the S-diacylglycerol cysteine lipid modification. The segment at 27-51 (TGGGSVSPSSIVTGVSMGSDGVGNP) is disordered.

It is found in the cell outer membrane. Its function is as follows. Lysis proteins are required for both colicin release and partial cell lysis. This is Lysis protein for colicin A (cal) from Citrobacter freundii.